We begin with the raw amino-acid sequence, 379 residues long: Cytochrome b (379 aa).

Helical transmembrane passes span 32 to 52 (FGSL…FLAM), 76 to 97 (WLIR…YMHI), 112 to 132 (WNVG…GYVL), and 177 to 197 (FFAF…IHLL). 2 residues coordinate heme b: histidine 82 and histidine 96. The heme b site is built by histidine 181 and histidine 195. Histidine 200 lines the a ubiquinone pocket. 4 helical membrane passes run 225–245 (YKDL…ALFS), 287–307 (LGGV…PFLH), 319–339 (LTQI…WIGG), and 346–366 (FIII…VLSP).

Belongs to the cytochrome b family. The cytochrome bc1 complex contains 3 respiratory subunits (MT-CYB, CYC1 and UQCRFS1), 2 core proteins (UQCRC1 and UQCRC2) and probably 6 low-molecular weight proteins. It depends on heme b as a cofactor.

It is found in the mitochondrion inner membrane. In terms of biological role, component of the ubiquinol-cytochrome c reductase complex (complex III or cytochrome b-c1 complex) that is part of the mitochondrial respiratory chain. The b-c1 complex mediates electron transfer from ubiquinol to cytochrome c. Contributes to the generation of a proton gradient across the mitochondrial membrane that is then used for ATP synthesis. The protein is Cytochrome b (mt-cyb) of Chlorophthalmus agassizi (Shortnose greeneye).